A 140-amino-acid chain; its full sequence is Nucleoside diphosphate kinase (140 aa).

Lys11, Phe59, Arg87, Thr93, Arg104, and Asn114 together coordinate ATP. His117 acts as the Pros-phosphohistidine intermediate in catalysis.

Belongs to the NDK family. As to quaternary structure, homotetramer. It depends on Mg(2+) as a cofactor.

The protein localises to the cytoplasm. The enzyme catalyses a 2'-deoxyribonucleoside 5'-diphosphate + ATP = a 2'-deoxyribonucleoside 5'-triphosphate + ADP. The catalysed reaction is a ribonucleoside 5'-diphosphate + ATP = a ribonucleoside 5'-triphosphate + ADP. Major role in the synthesis of nucleoside triphosphates other than ATP. The ATP gamma phosphate is transferred to the NDP beta phosphate via a ping-pong mechanism, using a phosphorylated active-site intermediate. The polypeptide is Nucleoside diphosphate kinase (Gluconacetobacter diazotrophicus (strain ATCC 49037 / DSM 5601 / CCUG 37298 / CIP 103539 / LMG 7603 / PAl5)).